The sequence spans 296 residues: Haloalkane dehalogenase (296 aa).

Positions 31–155 constitute an AB hydrolase-1 domain; it reads PILFQHGNPT…QDRDLFQAFR (125 aa). The active-site Nucleophile is the Asp-108. Glu-132 (proton donor) is an active-site residue. His-272 acts as the Proton acceptor in catalysis.

The protein belongs to the haloalkane dehalogenase family. Type 2 subfamily. Monomer.

It localises to the periplasm. It catalyses the reaction 1-haloalkane + H2O = a halide anion + a primary alcohol + H(+). The catalysed reaction is (3R,6R)-1,3,4,6-tetrachlorocyclohexa-1,4-diene + 2 H2O = 2,5-dichlorocyclohexa-2,5-dien-1,4-diol + 2 chloride + 2 H(+). It participates in xenobiotic degradation; gamma-hexachlorocyclohexane degradation. Its function is as follows. Catalyzes hydrolytic cleavage of carbon-halogen bonds in halogenated aliphatic compounds, leading to the formation of the corresponding primary alcohols, halide ions and protons. Is involved in the degradation of the important environmental pollutant gamma-hexachlorocyclohexane (gamma-HCH or lindane) as it also catalyzes conversion of 1,3,4,6-tetrachloro-1,4-cyclohexadiene (1,4-TCDN) to 2,5-dichloro-2,5-cyclohexadiene-1,4-diol (2,5-DDOL) via the intermediate 2,4,5-trichloro-2,5-cyclohexadiene-1-ol (2,4,5-DNOL). In Sphingobium indicum (strain DSM 16412 / CCM 7286 / MTCC 6364 / B90A), this protein is Haloalkane dehalogenase.